The primary structure comprises 395 residues: Chalcone synthase 7 (395 aa).

Residue Cys169 is part of the active site.

This sequence belongs to the thiolase-like superfamily. Chalcone/stilbene synthases family.

The catalysed reaction is (E)-4-coumaroyl-CoA + 3 malonyl-CoA + 3 H(+) = 2',4,4',6'-tetrahydroxychalcone + 3 CO2 + 4 CoA. It participates in secondary metabolite biosynthesis; flavonoid biosynthesis. Functionally, the primary product of this enzyme is 4,2',4',6'-tetrahydroxychalcone (also termed naringenin-chalcone or chalcone) which can under specific conditions spontaneously isomerize into naringenin. The protein is Chalcone synthase 7 (CSF7) of Picea mariana (Black spruce).